We begin with the raw amino-acid sequence, 549 residues long: Glucose-6-phosphate isomerase (549 aa).

Residues Lys-80, Lys-228, and Lys-234 each carry the N6-acetyllysine modification. The active-site Proton donor is Glu-355. Active-site residues include His-386 and Lys-514.

Belongs to the GPI family.

Its subcellular location is the cytoplasm. The catalysed reaction is alpha-D-glucose 6-phosphate = beta-D-fructose 6-phosphate. Its pathway is carbohydrate biosynthesis; gluconeogenesis. It functions in the pathway carbohydrate degradation; glycolysis; D-glyceraldehyde 3-phosphate and glycerone phosphate from D-glucose: step 2/4. Catalyzes the reversible isomerization of glucose-6-phosphate to fructose-6-phosphate. The protein is Glucose-6-phosphate isomerase of Escherichia coli O127:H6 (strain E2348/69 / EPEC).